The sequence spans 154 residues: Ubiquitin-like protein 4A (154 aa).

Residues 1–76 (MILTVKPLQG…LNLVVRPAGE (76 aa)) form the Ubiquitin-like domain.

In terms of assembly, component of the bag6/bat3 complex.

Its subcellular location is the cytoplasm. It localises to the cytosol. The protein resides in the nucleus. In terms of biological role, as part of a cytosolic protein quality control complex, the bag6/bat3 complex, maintains misfolded and hydrophobic patches-containing proteins in a soluble state and participates in their proper delivery to the endoplasmic reticulum or alternatively can promote their sorting to the proteasome where they undergo degradation. The bag6/bat3 complex is involved in the post-translational delivery of tail-anchored/type II transmembrane proteins to the endoplasmic reticulum membrane. Similarly, the bag6/bat3 complex also functions as a sorting platform for proteins of the secretory pathway that are mislocalized to the cytosol either delivering them to the proteasome for degradation or to the endoplasmic reticulum. The bag6/bat3 complex also plays a role in the endoplasmic reticulum-associated degradation (ERAD), a quality control mechanism that eliminates unwanted proteins of the endoplasmic reticulum through their retrotranslocation to the cytosol and their targeting to the proteasome. It maintains these retrotranslocated proteins in an unfolded yet soluble state condition in the cytosol to ensure their proper delivery to the proteasome. This chain is Ubiquitin-like protein 4A (ubl4a), found in Esox lucius (Northern pike).